The sequence spans 229 residues: Secretory carrier-associated membrane protein 4 (229 aa).

Over 1 to 39 (MSEKENNFPPLPKFIPVKPCFYQNFSDEIPVEHQVLVKR) the chain is Cytoplasmic. Helical transmembrane passes span 40–60 (IYRL…ACLA), 61–81 (WWIG…LLLF), 105–125 (FMAF…QAIG), and 149–169 (VVML…AIAI). The Cytoplasmic portion of the chain corresponds to 170-229 (MKVHRIYRGAGGSFQKAQTEWNTGTWRNPPSREAQYNNFSGNSLPEYPTVPSYPGSGQWP). Position 194 is a phosphothreonine (Thr-194). The segment at 208-229 (FSGNSLPEYPTVPSYPGSGQWP) is disordered.

Belongs to the SCAMP family.

The protein resides in the membrane. Probably involved in membrane protein trafficking. The polypeptide is Secretory carrier-associated membrane protein 4 (SCAMP4) (Pongo abelii (Sumatran orangutan)).